The chain runs to 432 residues: Tol-Pal system protein TolB (432 aa).

An N-terminal signal peptide occupies residues 1–21 (MSTLIRIALFALALMAGAAQA).

The protein belongs to the TolB family. In terms of assembly, the Tol-Pal system is composed of five core proteins: the inner membrane proteins TolA, TolQ and TolR, the periplasmic protein TolB and the outer membrane protein Pal. They form a network linking the inner and outer membranes and the peptidoglycan layer.

The protein localises to the periplasm. Functionally, part of the Tol-Pal system, which plays a role in outer membrane invagination during cell division and is important for maintaining outer membrane integrity. The polypeptide is Tol-Pal system protein TolB (Pseudomonas aeruginosa (strain ATCC 15692 / DSM 22644 / CIP 104116 / JCM 14847 / LMG 12228 / 1C / PRS 101 / PAO1)).